The chain runs to 337 residues: tRNA(Ile)-lysidine synthase (337 aa).

40–45 (SGGQDS) is an ATP binding site.

Belongs to the tRNA(Ile)-lysidine synthase family.

The protein localises to the cytoplasm. The catalysed reaction is cytidine(34) in tRNA(Ile2) + L-lysine + ATP = lysidine(34) in tRNA(Ile2) + AMP + diphosphate + H(+). In terms of biological role, ligates lysine onto the cytidine present at position 34 of the AUA codon-specific tRNA(Ile) that contains the anticodon CAU, in an ATP-dependent manner. Cytidine is converted to lysidine, thus changing the amino acid specificity of the tRNA from methionine to isoleucine. The chain is tRNA(Ile)-lysidine synthase from Parasynechococcus marenigrum (strain WH8102).